We begin with the raw amino-acid sequence, 138 residues long: Putative pre-16S rRNA nuclease (138 aa).

It belongs to the YqgF nuclease family.

The protein resides in the cytoplasm. Functionally, could be a nuclease involved in processing of the 5'-end of pre-16S rRNA. This Karelsulcia muelleri (strain GWSS) (Sulcia muelleri) protein is Putative pre-16S rRNA nuclease.